The sequence spans 216 residues: Golgi to ER traffic protein 1 (216 aa).

Residues 1–9 lie on the Lumenal side of the membrane; it reads MFDISSSNL. Residues 10–29 form a helical membrane-spanning segment; it reads LISVLVVLFAKQLINAVGKA. Topologically, residues 30–116 are cytoplasmic; that stretch reads TLENIGWSAY…YISKYIGYMI (87 aa). The stretch at 54 to 105 forms a coiled coil; that stretch reads LDQKNVELAKVSKERKSISAQDQYARWTKLNRQFDKLTGEINKLKEETSASR. The helical transmembrane segment at 117-137 threads the bilayer; the sequence is LVTTTLPIWFFRVWFRKAVLF. The Lumenal portion of the chain corresponds to 138 to 161; the sequence is YFPTGVLPHYLEWFLALPFITTGG. The chain crosses the membrane as a helical span at residues 162–178; the sequence is VGLTIWMSAVNNVVSSV. At 179–216 the chain is on the cytoplasmic side; sequence IFLVKFPFEKEVPFPSKEVGNEKTSINKEEVSGTPAAN. The segment at 193–216 is disordered; the sequence is PSKEVGNEKTSINKEEVSGTPAAN. Residues 197-209 show a composition bias toward basic and acidic residues; the sequence is VGNEKTSINKEEV.

This sequence belongs to the WRB/GET1 family. As to quaternary structure, component of the Golgi to ER traffic (GET) complex, which is composed of GET1, GET2 and GET3. Within the complex, GET1 and GET2 form a heterotetramer which is stabilized by phosphatidylinositol binding and which binds to the GET3 homodimer.

The protein localises to the endoplasmic reticulum membrane. Its subcellular location is the golgi apparatus membrane. Functionally, required for the post-translational delivery of tail-anchored (TA) proteins to the endoplasmic reticulum. Together with GET2, acts as a membrane receptor for soluble GET3, which recognizes and selectively binds the transmembrane domain of TA proteins in the cytosol. The GET complex cooperates with the HDEL receptor ERD2 to mediate the ATP-dependent retrieval of resident ER proteins that contain a C-terminal H-D-E-L retention signal from the Golgi to the ER. The protein is Golgi to ER traffic protein 1 of Debaryomyces hansenii (strain ATCC 36239 / CBS 767 / BCRC 21394 / JCM 1990 / NBRC 0083 / IGC 2968) (Yeast).